Consider the following 333-residue polypeptide: Glycerol-3-phosphate dehydrogenase [NAD(P)+] (333 aa).

Positions 10, 11, 31, 32, and 105 each coordinate NADPH. Sn-glycerol 3-phosphate contacts are provided by Lys-105, Gly-136, and Ser-138. Ala-140 is an NADPH binding site. Sn-glycerol 3-phosphate is bound by residues Lys-191, Asp-244, Ser-254, Arg-255, and Asn-256. The active-site Proton acceptor is Lys-191. Residue Arg-255 participates in NADPH binding. Residues Val-279 and Glu-281 each coordinate NADPH.

Belongs to the NAD-dependent glycerol-3-phosphate dehydrogenase family.

It localises to the cytoplasm. It carries out the reaction sn-glycerol 3-phosphate + NAD(+) = dihydroxyacetone phosphate + NADH + H(+). It catalyses the reaction sn-glycerol 3-phosphate + NADP(+) = dihydroxyacetone phosphate + NADPH + H(+). Its pathway is membrane lipid metabolism; glycerophospholipid metabolism. Catalyzes the reduction of the glycolytic intermediate dihydroxyacetone phosphate (DHAP) to sn-glycerol 3-phosphate (G3P), the key precursor for phospholipid synthesis. The chain is Glycerol-3-phosphate dehydrogenase [NAD(P)+] from Chlorobium phaeobacteroides (strain DSM 266 / SMG 266 / 2430).